The primary structure comprises 319 residues: 4-hydroxy-3-methylbut-2-enyl diphosphate reductase (319 aa).

Cys12 lines the [4Fe-4S] cluster pocket. Residues His41 and His74 each coordinate (2E)-4-hydroxy-3-methylbut-2-enyl diphosphate. Dimethylallyl diphosphate is bound by residues His41 and His74. Isopentenyl diphosphate contacts are provided by His41 and His74. Position 97 (Cys97) interacts with [4Fe-4S] cluster. His125 is a binding site for (2E)-4-hydroxy-3-methylbut-2-enyl diphosphate. His125 is a binding site for dimethylallyl diphosphate. His125 is a binding site for isopentenyl diphosphate. The active-site Proton donor is the Glu127. (2E)-4-hydroxy-3-methylbut-2-enyl diphosphate is bound at residue Thr168. Position 198 (Cys198) interacts with [4Fe-4S] cluster. Residues Ser226, Ser227, Asn228, and Ser270 each coordinate (2E)-4-hydroxy-3-methylbut-2-enyl diphosphate. Ser226, Ser227, Asn228, and Ser270 together coordinate dimethylallyl diphosphate. The isopentenyl diphosphate site is built by Ser226, Ser227, Asn228, and Ser270.

The protein belongs to the IspH family. Homodimer. [4Fe-4S] cluster is required as a cofactor.

It catalyses the reaction isopentenyl diphosphate + 2 oxidized [2Fe-2S]-[ferredoxin] + H2O = (2E)-4-hydroxy-3-methylbut-2-enyl diphosphate + 2 reduced [2Fe-2S]-[ferredoxin] + 2 H(+). The enzyme catalyses dimethylallyl diphosphate + 2 oxidized [2Fe-2S]-[ferredoxin] + H2O = (2E)-4-hydroxy-3-methylbut-2-enyl diphosphate + 2 reduced [2Fe-2S]-[ferredoxin] + 2 H(+). It participates in isoprenoid biosynthesis; dimethylallyl diphosphate biosynthesis; dimethylallyl diphosphate from (2E)-4-hydroxy-3-methylbutenyl diphosphate: step 1/1. It functions in the pathway isoprenoid biosynthesis; isopentenyl diphosphate biosynthesis via DXP pathway; isopentenyl diphosphate from 1-deoxy-D-xylulose 5-phosphate: step 6/6. Its function is as follows. Catalyzes the conversion of 1-hydroxy-2-methyl-2-(E)-butenyl 4-diphosphate (HMBPP) into a mixture of isopentenyl diphosphate (IPP) and dimethylallyl diphosphate (DMAPP). Acts in the terminal step of the DOXP/MEP pathway for isoprenoid precursor biosynthesis. This Hamiltonella defensa subsp. Acyrthosiphon pisum (strain 5AT) protein is 4-hydroxy-3-methylbut-2-enyl diphosphate reductase.